A 280-amino-acid chain; its full sequence is Nitrogenase iron protein (280 aa).

9 to 16 contacts ATP; that stretch reads GKGGIGKS. Cys-97 is a [4Fe-4S] cluster binding site. ADP-ribosylarginine; by dinitrogenase reductase ADP-ribosyltransferase is present on Arg-100. Position 132 (Cys-132) interacts with [4Fe-4S] cluster.

It belongs to the NifH/BchL/ChlL family. In terms of assembly, homodimer. It depends on [4Fe-4S] cluster as a cofactor. The reversible ADP-ribosylation of Arg-100 inactivates the nitrogenase reductase and regulates nitrogenase activity.

It carries out the reaction N2 + 8 reduced [2Fe-2S]-[ferredoxin] + 16 ATP + 16 H2O = H2 + 8 oxidized [2Fe-2S]-[ferredoxin] + 2 NH4(+) + 16 ADP + 16 phosphate + 6 H(+). Functionally, the key enzymatic reactions in nitrogen fixation are catalyzed by the nitrogenase complex, which has 2 components: the iron protein and the molybdenum-iron protein. This is Nitrogenase iron protein from Desulforudis audaxviator (strain MP104C).